Reading from the N-terminus, the 255-residue chain is MAVGKNKRLSKGKKGLKKRTQDPFSRKDEYSVKAPSTFAVRDVGKTLVNRTTGLKNANDSLKGRIFEVSLADLQNDEDHAFRKVKLRVDEVQGKNCLTNFHGLDFTSDKLRSLVRKWQTLIEANVTVKTTDDYLLRLFAIAFTKRRPNQIKKTTYARSSQIRAIRKKITEIIQREASSRTLAQLTKLIPEVIGREIEKSTHGIYPLQNVHIRKVKLLKSPKFDLGALLALHGESSTDDKGQKVEREFKEQVLESV.

Basic residues predominate over residues 1–18 (MAVGKNKRLSKGKKGLKK). The disordered stretch occupies residues 1 to 28 (MAVGKNKRLSKGKKGLKKRTQDPFSRKD). An N-acetylalanine; partial modification is found at Ala-2. Basic and acidic residues predominate over residues 19 to 28 (RTQDPFSRKD).

Belongs to the eukaryotic ribosomal protein eS1 family. In terms of assembly, component of the small ribosomal subunit. Mature ribosomes consist of a small (40S) and a large (60S) subunit. The 40S subunit contains about 33 different proteins and 1 molecule of RNA (18S). The 60S subunit contains about 49 different proteins and 3 molecules of RNA (25S, 5.8S and 5S).

The protein localises to the cytoplasm. This is Small ribosomal subunit protein eS1 from Ajellomyces capsulatus (strain NAm1 / WU24) (Darling's disease fungus).